The following is a 209-amino-acid chain: Glycolipid transfer protein A (209 aa).

2 consecutive repeat copies span residues Ile-45–Lys-55 and Ile-56–Lys-66. The 2 X 12 AA approximate tandem repeats stretch occupies residues Ile-45 to Lys-66. Asp-48–Lys-55 contributes to the beta-D-galactosyl-(1-&gt;4)-beta-D-glucosyl-(1&lt;-&gt;1)-N-[(9Z)-octadecenoyl]-sphing-4-enine binding site. Residues His-140 and Tyr-207 each coordinate beta-D-galactosyl-(1-&gt;4)-beta-D-glucosyl-(1&lt;-&gt;1)-N-[(9Z)-octadecenoyl]-sphing-4-enine.

This sequence belongs to the GLTP family.

The protein resides in the cytoplasm. Its function is as follows. Accelerates the intermembrane transfer of various glycolipids. Catalyzes the transfer of various glycosphingolipids between membranes but does not catalyze the transfer of phospholipids. May be involved in the intracellular translocation of glucosylceramides. In Xenopus laevis (African clawed frog), this protein is Glycolipid transfer protein A (gltp-a).